The primary structure comprises 196 residues: Oplophorus-luciferin 2-monooxygenase catalytic subunit (196 aa).

The first 27 residues, 1–27 (MAYSTLFIIALTAVVTQASSTQKSNLT), serve as a signal peptide directing secretion.

As to quaternary structure, heterotetramer of a catalytic 19 kDa and a non-catalytic 35 kDa subunit.

The protein resides in the secreted. It carries out the reaction coelenterazine + O2 = coelenteramide + hnu + CO2. Its activity is regulated as follows. Inhibited by micromolar Cu(2+). Catalytic subunit of oplophorus-luciferin 2-monooxygenase. Oxidoreductase that converts coelenterazine (the oplophorus luciferin) to coelenteramide under emission of blue light with a maximum at 454 nm. Is also active with bisdeoxycoelenterazine. This Oplophorus gracilirostris (Luminous shrimp) protein is Oplophorus-luciferin 2-monooxygenase catalytic subunit.